The primary structure comprises 77 residues: Conotoxin Vc6b (77 aa).

An N-terminal signal peptide occupies residues 1–22 (MKLTCMMIVAVLFLTANTFVTA). Positions 23–47 (DDSGNGMENLFPKAGHEMENLEASN) are excised as a propeptide. Disulfide bonds link Cys52–Cys66, Cys59–Cys72, and Cys67–Cys76.

As to expression, expressed by the venom duct.

It localises to the secreted. The protein is Conotoxin Vc6b of Conus victoriae (Queen Victoria cone).